We begin with the raw amino-acid sequence, 203 residues long: AFG2-interacting ribosome maturation factor (203 aa).

Part of the 55LCC heterohexameric ATPase complex composed at least of AIRIM, AFG2A, AFG2B and CINP. Does not associate with pre-60S ribosomal particles. Post-translationally, phosphorylated on serines by CK2 kinase.

It is found in the nucleus. The protein resides in the cytoplasm. Its function is as follows. Part of the 55LCC heterohexameric ATPase complex which is chromatin-associated and promotes replisome proteostasis to maintain replication fork progression and genome stability. Required for replication fork progression, sister chromatid cohesion, and chromosome stability. The ATPase activity is specifically enhanced by replication fork DNA and is coupled to cysteine protease-dependent cleavage of replisome substrates in response to replication fork damage. Uses ATPase activity to process replisome substrates in S-phase, facilitating their proteolytic turnover from chromatin to ensure DNA replication and mitotic fidelity. Involved in the cytoplasmic maturation steps of pre-60S ribosomal particles by promoting the release of shuttling protein RSL24D1/RLP24 from the pre-ribosomal particles. The protein is AFG2-interacting ribosome maturation factor of Homo sapiens (Human).